Reading from the N-terminus, the 166-residue chain is Large ribosomal subunit protein mL49 (166 aa).

The protein belongs to the mitochondrion-specific ribosomal protein mL49 family. As to quaternary structure, component of the mitochondrial ribosome large subunit (39S) which comprises a 16S rRNA and about 50 distinct proteins. Interacts with OXA1L.

Its subcellular location is the mitochondrion. The protein is Large ribosomal subunit protein mL49 (MRPL49) of Bos taurus (Bovine).